Here is a 1264-residue protein sequence, read N- to C-terminus: Regulator of G-protein signaling 22 (1264 aa).

The segment at Glu-565–Gln-587 is disordered. Positions Ser-568–Lys-578 are enriched in polar residues. RGS domains follow at residues Lys-852–Gln-980 and Ala-1021–Asn-1145. Positions Thr-1142 to Asp-1174 form a coiled coil.

In terms of assembly, interacts with GNA11, GNA12 and GNA13. As to expression, testis-specific. Expressed in Leydig cells and spermatogenic cells from the spermatogonia to spermatid stages (at protein level).

The protein resides in the cytoplasm. It is found in the nucleus. In terms of biological role, inhibits signal transduction by increasing the GTPase activity of G protein alpha subunits thereby driving them into their inactive GDP-bound form. This Homo sapiens (Human) protein is Regulator of G-protein signaling 22 (RGS22).